We begin with the raw amino-acid sequence, 525 residues long: GMP synthase [glutamine-hydrolyzing] (525 aa).

Positions 8 to 206 (PLLILDFGSQ…VVDICKAPTE (199 aa)) constitute a Glutamine amidotransferase type-1 domain. Catalysis depends on cysteine 85, which acts as the Nucleophile. Catalysis depends on residues histidine 180 and glutamate 182. The region spanning 207 to 400 (WTPEHIIDEA…LGLPHDMVYR (194 aa)) is the GMPS ATP-PPase domain. ATP is bound at residue 234–240 (SGGVDSS).

Homodimer.

The catalysed reaction is XMP + L-glutamine + ATP + H2O = GMP + L-glutamate + AMP + diphosphate + 2 H(+). It functions in the pathway purine metabolism; GMP biosynthesis; GMP from XMP (L-Gln route): step 1/1. Its function is as follows. Catalyzes the synthesis of GMP from XMP. The sequence is that of GMP synthase [glutamine-hydrolyzing] from Legionella pneumophila (strain Corby).